The chain runs to 505 residues: Maturase K (505 aa).

The protein belongs to the intron maturase 2 family. MatK subfamily.

Its subcellular location is the plastid. The protein localises to the chloroplast. Functionally, usually encoded in the trnK tRNA gene intron. Probably assists in splicing its own and other chloroplast group II introns. The protein is Maturase K of Elaeagnus umbellata (Autumn olive).